A 191-amino-acid polypeptide reads, in one-letter code: MKKQLLSALIGVSLLAPMAASAADYVIDTEGAHASITFKVNHLGYSYVVGRFNDFSGDFSYDAAKPTAMTVNVTVNTLSVDSNHAERDKHIRGEDFLNTGKFAKATFASTSVEDKGNGDLVINGNLTLNGVTKPLAIKAHAVGEGQDPWGGYRAGFTGTTTFAMKDFGIKMDLGPASSHVELDLVVEGVRK.

Residues 1-22 (MKKQLLSALIGVSLLAPMAASA) form the signal peptide.

Belongs to the UPF0312 family. Type 1 subfamily.

Its subcellular location is the periplasm. In Shewanella putrefaciens (strain CN-32 / ATCC BAA-453), this protein is UPF0312 protein Sputcn32_2702.